Reading from the N-terminus, the 367-residue chain is 3-dehydroquinate synthase (367 aa).

NAD(+) contacts are provided by residues 111 to 115, 135 to 136, lysine 148, lysine 157, and 175 to 178; these read GVVGD, TS, and TLDT. Zn(2+) is bound by residues glutamate 190, histidine 254, and histidine 271.

Belongs to the sugar phosphate cyclases superfamily. Dehydroquinate synthase family. Co(2+) serves as cofactor. Requires Zn(2+) as cofactor. It depends on NAD(+) as a cofactor.

It is found in the cytoplasm. It catalyses the reaction 7-phospho-2-dehydro-3-deoxy-D-arabino-heptonate = 3-dehydroquinate + phosphate. It participates in metabolic intermediate biosynthesis; chorismate biosynthesis; chorismate from D-erythrose 4-phosphate and phosphoenolpyruvate: step 2/7. Catalyzes the conversion of 3-deoxy-D-arabino-heptulosonate 7-phosphate (DAHP) to dehydroquinate (DHQ). This is 3-dehydroquinate synthase from Salinibacter ruber (strain DSM 13855 / M31).